A 400-amino-acid polypeptide reads, in one-letter code: uncharacterized protein (400 aa).

Positions Asn-161–Leu-380 constitute a TR mART core domain.

This is an uncharacterized protein from Acanthamoeba polyphaga (Amoeba).